We begin with the raw amino-acid sequence, 257 residues long: DNA repair protein RecO (257 aa).

This sequence belongs to the RecO family.

Involved in DNA repair and RecF pathway recombination. The sequence is that of DNA repair protein RecO from Synechococcus sp. (strain CC9605).